The sequence spans 502 residues: T-complex protein 11-like X-linked protein 1 (502 aa).

Positions 1–36 (MPKTEETVLQNDPSVAENGAPEPKTPGQSQKSKSFC) are disordered.

The protein belongs to the TCP11 family.

The protein is T-complex protein 11-like X-linked protein 1 of Homo sapiens (Human).